The primary structure comprises 404 residues: NADH-quinone oxidoreductase subunit D 2 (404 aa).

This sequence belongs to the complex I 49 kDa subunit family. As to quaternary structure, NDH-1 is composed of 14 different subunits. Subunits NuoB, C, D, E, F, and G constitute the peripheral sector of the complex.

Its subcellular location is the cell inner membrane. The enzyme catalyses a quinone + NADH + 5 H(+)(in) = a quinol + NAD(+) + 4 H(+)(out). In terms of biological role, NDH-1 shuttles electrons from NADH, via FMN and iron-sulfur (Fe-S) centers, to quinones in the respiratory chain. The immediate electron acceptor for the enzyme in this species is believed to be ubiquinone. Couples the redox reaction to proton translocation (for every two electrons transferred, four hydrogen ions are translocated across the cytoplasmic membrane), and thus conserves the redox energy in a proton gradient. The polypeptide is NADH-quinone oxidoreductase subunit D 2 (Rhizobium meliloti (strain 1021) (Ensifer meliloti)).